The sequence spans 1657 residues: Putative serine/threonine-protein kinase/receptor R826 (1657 aa).

The signal sequence occupies residues Met1–Cys23. 9 N-linked (GlcNAc...) asparagine; by host glycosylation sites follow: Asn153, Asn178, Asn238, Asn255, Asn352, Asn454, Asn476, Asn494, and Asn596. The helical transmembrane segment at Ile742–Val762 threads the bilayer. The Protein kinase 1 domain occupies Leu786 to Met1049. Residues Leu792–Val800 and Lys813 contribute to the ATP site. Asp909 serves as the catalytic Proton acceptor. The interval Val1089 to Asn1115 is disordered. Residues Val1134 to Thr1277 form the Guanylate cyclase domain. One can recognise a Protein kinase 2 domain in the interval Ile1399–Phe1651. ATP-binding positions include Ile1405–Val1413 and Lys1426. Asp1522 functions as the Proton acceptor in the catalytic mechanism.

The protein resides in the membrane. It carries out the reaction L-seryl-[protein] + ATP = O-phospho-L-seryl-[protein] + ADP + H(+). It catalyses the reaction L-threonyl-[protein] + ATP = O-phospho-L-threonyl-[protein] + ADP + H(+). In Acanthamoeba polyphaga mimivirus (APMV), this protein is Putative serine/threonine-protein kinase/receptor R826.